Here is a 791-residue protein sequence, read N- to C-terminus: Endonuclease MutS2 (791 aa).

339–346 contacts ATP; that stretch reads GPNTGGKT. A Smr domain is found at 715-790; sequence LDLRGERYET…GSGVTIADLK (76 aa).

The protein belongs to the DNA mismatch repair MutS family. MutS2 subfamily. As to quaternary structure, homodimer. Binds to stalled ribosomes, contacting rRNA.

Functionally, endonuclease that is involved in the suppression of homologous recombination and thus may have a key role in the control of bacterial genetic diversity. Its function is as follows. Acts as a ribosome collision sensor, splitting the ribosome into its 2 subunits. Detects stalled/collided 70S ribosomes which it binds and splits by an ATP-hydrolysis driven conformational change. Acts upstream of the ribosome quality control system (RQC), a ribosome-associated complex that mediates the extraction of incompletely synthesized nascent chains from stalled ribosomes and their subsequent degradation. Probably generates substrates for RQC. The protein is Endonuclease MutS2 of Halothermothrix orenii (strain H 168 / OCM 544 / DSM 9562).